The following is a 51-amino-acid chain: UPF0391 membrane protein PsycPRwf_2202 (51 aa).

2 helical membrane passes run 6 to 26 (IIFAVIALLASLLGFGGVAGL) and 27 to 47 (SQNFAYIFLVVAVILFIIGFI).

This sequence belongs to the UPF0391 family.

The protein localises to the cell membrane. This Psychrobacter sp. (strain PRwf-1) protein is UPF0391 membrane protein PsycPRwf_2202.